A 176-amino-acid polypeptide reads, in one-letter code: RNA 2',3'-cyclic phosphodiesterase (176 aa).

Histidine 28 serves as the catalytic Proton donor. 2 short sequence motifs (HXTX) span residues 28 to 31 (HITL) and 113 to 116 (HVTL). The Proton acceptor role is filled by histidine 113.

It belongs to the 2H phosphoesterase superfamily. ThpR family.

It catalyses the reaction a 3'-end 2',3'-cyclophospho-ribonucleotide-RNA + H2O = a 3'-end 2'-phospho-ribonucleotide-RNA + H(+). Functionally, hydrolyzes RNA 2',3'-cyclic phosphodiester to an RNA 2'-phosphomonoester. This Aeropyrum pernix (strain ATCC 700893 / DSM 11879 / JCM 9820 / NBRC 100138 / K1) protein is RNA 2',3'-cyclic phosphodiesterase.